The sequence spans 371 residues: Glutamate 5-kinase (371 aa).

Lys14 provides a ligand contact to ATP. Residues Ser52, Asp139, and Asn151 each contribute to the substrate site. 171 to 172 (SD) contacts ATP. The PUA domain occupies 275–353 (EGRLHLDSGA…ADLAMELGPS (79 aa)).

This sequence belongs to the glutamate 5-kinase family.

It localises to the cytoplasm. It catalyses the reaction L-glutamate + ATP = L-glutamyl 5-phosphate + ADP. It participates in amino-acid biosynthesis; L-proline biosynthesis; L-glutamate 5-semialdehyde from L-glutamate: step 1/2. Its function is as follows. Catalyzes the transfer of a phosphate group to glutamate to form L-glutamate 5-phosphate. The chain is Glutamate 5-kinase from Frankia casuarinae (strain DSM 45818 / CECT 9043 / HFP020203 / CcI3).